A 222-amino-acid polypeptide reads, in one-letter code: MLCRAACSTGRRLGPVAGAAGSRHKHSLPDLPYDYGALEPHINAQIMQLHHSKHHAAYVNNLNATEEKYHEALAKGDVTTQVALQPALKFNGGGHINHTIFWTNLSPKGGGEPKGELLEAIKRDFGSFEKFKEKLTAVSVGVQGSGWGWLGFNKEQGRLQIAACSNQDPLQGTTGLIPLLGIDVWEHAYYLQYKNVRPDYLKAIWNVINWENVTERYTACKK.

The transit peptide at 1–24 (MLCRAACSTGRRLGPVAGAAGSRH) directs the protein to the mitochondrion. Histidine 50 is a binding site for Mn(2+). Tyrosine 58 is modified (3'-nitrotyrosine). N6-acetyllysine; alternate is present on residues lysine 68 and lysine 75. N6-succinyllysine; alternate occurs at positions 68 and 75. Residue histidine 98 coordinates Mn(2+). Position 114 is an N6-acetyllysine (lysine 114). N6-acetyllysine; alternate is present on residues lysine 122 and lysine 130. 2 positions are modified to N6-succinyllysine; alternate: lysine 122 and lysine 130. The Mn(2+) site is built by aspartate 183 and histidine 187. Lysine 202 is subject to N6-acetyllysine.

It belongs to the iron/manganese superoxide dismutase family. Homotetramer. Mn(2+) is required as a cofactor. Nitrated under oxidative stress. Nitration coupled with oxidation inhibits the catalytic activity. Post-translationally, acetylation at Lys-122 decreases enzymatic activity. Deacetylated by SIRT3 upon exposure to ionizing radiations or after long fasting. In terms of processing, polyubiquitinated; leading to proteasomal degradation. Deubiquitinated by USP36 which increases protein stability.

Its subcellular location is the mitochondrion matrix. The enzyme catalyses 2 superoxide + 2 H(+) = H2O2 + O2. Functionally, destroys superoxide anion radicals which are normally produced within the cells and which are toxic to biological systems. The polypeptide is Superoxide dismutase [Mn], mitochondrial (Sod2) (Mus musculus (Mouse)).